Consider the following 39-residue polypeptide: Omega-theraphotoxin-Ba1b (39 aa).

Intrachain disulfides connect Cys4–Cys17, Cys8–Cys31, and Cys25–Cys36.

This sequence belongs to the neurotoxin 12 (Hwtx-2) family. 06 (TXP1) subfamily. As to expression, expressed by the venom gland.

It localises to the secreted. Functionally, inhibits voltage-gated calcium channels (Cav) in rat cerebellar granule cells. Has insecticidal activity to crickets (Acheta domesticus). Is not toxic to mice. The protein is Omega-theraphotoxin-Ba1b of Brachypelma albiceps (Mexican golden redrump tarantula).